We begin with the raw amino-acid sequence, 120 residues long: uncharacterized protein (120 aa).

This is an uncharacterized protein from Dictyostelium discoideum (Social amoeba).